The following is a 632-amino-acid chain: Polyadenylate-binding protein, cytoplasmic and nuclear (632 aa).

The segment covering methionine 1 to glutamate 11 has biased composition (polar residues). The tract at residues methionine 1–aspartate 43 is disordered. Low complexity predominate over residues alanine 31–aspartate 43. RRM domains are found at residues alanine 52–arginine 130, glycine 140–serine 217, threonine 233–lysine 310, and valine 336–arginine 413. The PABC domain maps to glutamine 534–asparagine 615.

The protein belongs to the polyadenylate-binding protein type-1 family.

The protein localises to the cytoplasm. It localises to the nucleus. Its function is as follows. Binds the poly(A) tail of mRNA. Appears to be an important mediator of the multiple roles of the poly(A) tail in mRNA biogenesis, stability and translation. In the nucleus, involved in both mRNA cleavage and polyadenylation. Is also required for efficient mRNA export to the cytoplasm. Acts in concert with a poly(A)-specific nuclease (PAN) to affect poly(A) tail shortening, which may occur concomitantly with either nucleocytoplasmic mRNA transport or translational initiation. In the cytoplasm, stimulates translation initiation and regulates mRNA decay through translation termination-coupled poly(A) shortening, probably mediated by PAN. The chain is Polyadenylate-binding protein, cytoplasmic and nuclear (PAB1) from Scheffersomyces stipitis (strain ATCC 58785 / CBS 6054 / NBRC 10063 / NRRL Y-11545) (Yeast).